Consider the following 383-residue polypeptide: UPF0425 pyridoxal phosphate-dependent protein Msp_0916 (383 aa).

Position 207 is an N6-(pyridoxal phosphate)lysine (lysine 207).

The protein belongs to the UPF0425 family. Requires pyridoxal 5'-phosphate as cofactor.

In Methanosphaera stadtmanae (strain ATCC 43021 / DSM 3091 / JCM 11832 / MCB-3), this protein is UPF0425 pyridoxal phosphate-dependent protein Msp_0916.